Consider the following 903-residue polypeptide: Protein translocase subunit SecA (903 aa).

Residues Q89, 107-111 (GEGKT), and D502 contribute to the ATP site. Zn(2+) is bound by residues C886, C888, C897, and H898.

The protein belongs to the SecA family. As to quaternary structure, monomer and homodimer. Part of the essential Sec protein translocation apparatus which comprises SecA, SecYEG and auxiliary proteins SecDF-YajC and YidC. Requires Zn(2+) as cofactor.

Its subcellular location is the cell inner membrane. It localises to the cytoplasm. The catalysed reaction is ATP + H2O + cellular proteinSide 1 = ADP + phosphate + cellular proteinSide 2.. Functionally, part of the Sec protein translocase complex. Interacts with the SecYEG preprotein conducting channel. Has a central role in coupling the hydrolysis of ATP to the transfer of proteins into and across the cell membrane, serving both as a receptor for the preprotein-SecB complex and as an ATP-driven molecular motor driving the stepwise translocation of polypeptide chains across the membrane. The protein is Protein translocase subunit SecA of Sinorhizobium medicae (strain WSM419) (Ensifer medicae).